Here is a 343-residue protein sequence, read N- to C-terminus: UDP-3-O-acylglucosamine N-acyltransferase (343 aa).

Catalysis depends on His239, which acts as the Proton acceptor.

Belongs to the transferase hexapeptide repeat family. LpxD subfamily. Homotrimer.

It carries out the reaction a UDP-3-O-[(3R)-3-hydroxyacyl]-alpha-D-glucosamine + a (3R)-hydroxyacyl-[ACP] = a UDP-2-N,3-O-bis[(3R)-3-hydroxyacyl]-alpha-D-glucosamine + holo-[ACP] + H(+). Its pathway is bacterial outer membrane biogenesis; LPS lipid A biosynthesis. In terms of biological role, catalyzes the N-acylation of UDP-3-O-acylglucosamine using 3-hydroxyacyl-ACP as the acyl donor. Is involved in the biosynthesis of lipid A, a phosphorylated glycolipid that anchors the lipopolysaccharide to the outer membrane of the cell. The protein is UDP-3-O-acylglucosamine N-acyltransferase of Vibrio vulnificus (strain YJ016).